The following is a 138-amino-acid chain: ATP synthase epsilon chain (138 aa).

It belongs to the ATPase epsilon chain family. As to quaternary structure, F-type ATPases have 2 components, CF(1) - the catalytic core - and CF(0) - the membrane proton channel. CF(1) has five subunits: alpha(3), beta(3), gamma(1), delta(1), epsilon(1). CF(0) has three main subunits: a, b and c.

The protein localises to the cellular thylakoid membrane. In terms of biological role, produces ATP from ADP in the presence of a proton gradient across the membrane. This Synechococcus sp. (strain PCC 6716) protein is ATP synthase epsilon chain (atpC).